A 635-amino-acid chain; its full sequence is Threonine--tRNA ligase (635 aa).

The TGS domain occupies 1–58 (MIRVICDNETFELPTGSTAADFASKIKNSHYFAGVVINDQIKDLSTTLSEGDVLKFVT). The interval 237-528 (DHRVLGTKLD…LIEHFKGRFP (292 aa)) is catalytic. 3 residues coordinate Zn(2+): cysteine 328, histidine 379, and histidine 505.

This sequence belongs to the class-II aminoacyl-tRNA synthetase family. As to quaternary structure, homodimer. Zn(2+) is required as a cofactor.

The protein resides in the cytoplasm. It catalyses the reaction tRNA(Thr) + L-threonine + ATP = L-threonyl-tRNA(Thr) + AMP + diphosphate + H(+). In terms of biological role, catalyzes the attachment of threonine to tRNA(Thr) in a two-step reaction: L-threonine is first activated by ATP to form Thr-AMP and then transferred to the acceptor end of tRNA(Thr). Also edits incorrectly charged L-seryl-tRNA(Thr). The polypeptide is Threonine--tRNA ligase (Chlamydia felis (strain Fe/C-56) (Chlamydophila felis)).